Consider the following 328-residue polypeptide: Malate dehydrogenase (328 aa).

11-17 (GAAGQIG) contributes to the NAD(+) binding site. The substrate site is built by Arg94 and Arg100. NAD(+) contacts are provided by residues Asn107, Gln114, and 131-133 (VGN). Substrate contacts are provided by Asn133 and Arg164. His189 (proton acceptor) is an active-site residue.

The protein belongs to the LDH/MDH superfamily. MDH type 2 family.

It carries out the reaction (S)-malate + NAD(+) = oxaloacetate + NADH + H(+). In terms of biological role, catalyzes the reversible oxidation of malate to oxaloacetate. The polypeptide is Malate dehydrogenase (Xanthomonas axonopodis pv. citri (strain 306)).